Reading from the N-terminus, the 385-residue chain is Nod factor hydrolase protein 1 (385 aa).

The signal sequence occupies residues 1-21; the sequence is MANFLKLKQFLTLVLILLALA. Residues 36-385 form the GH18 domain; that stretch reads RVKGIYWIEN…TASKAWRPES (350 aa). Asparagine 115 and asparagine 134 each carry an N-linked (GlcNAc...) asparagine glycan. Glutamate 153 (proton donor) is an active-site residue. Asparagine 233 and asparagine 247 each carry an N-linked (GlcNAc...) asparagine glycan.

This sequence belongs to the glycosyl hydrolase 18 family. Chitinase class V subfamily.

Functionally, symbiotic enzyme that hydrolytically inactivates Nod factors (NFs) with a C16:2 acyl chain produced by the microsymbiont Sinorhizobium meliloti. NFs are lipo-chitooligosaccharide signaling molecules produced by nitrogen-fixing rhizobia to initiate nodulation (symbiosis) on the roots of legumes. Controls NF hydrolysis at the stage of root hair infection. Involved in the regulation of growth and branching of mature nodules. Modulates NF levels and signaling to complete transition of infected nodules to functional nitrogen-fixing organs. Lacks chitinase activity in vitro toward glycol chitin, carboxymethyl-chitin, colloidal chitin, and the chitin oligosaccharides (N-acetylglucosamine) (GlcNAc)6 and (GlcNAc)5. In Medicago truncatula (Barrel medic), this protein is Nod factor hydrolase protein 1.